Consider the following 240-residue polypeptide: Probable transcriptional regulatory protein HPG27_148 (240 aa).

It belongs to the TACO1 family.

It localises to the cytoplasm. This Helicobacter pylori (strain G27) protein is Probable transcriptional regulatory protein HPG27_148.